The primary structure comprises 454 residues: Putative KilA-N domain-containing protein L4 (454 aa).

Basic residues predominate over residues 1–12; sequence MPQKTSKSKSSR. The tract at residues 1 to 159 is disordered; that stretch reads MPQKTSKSKS…DVPEEEYDDN (159 aa). The span at 14–64 shows a compositional bias: basic and acidic residues; the sequence is RYIEDSDDETRGRSRNRSIEKSRSRSLDKSQKKSRDKSLTRSRSKSPEKSK. Positions 65–79 are enriched in basic residues; it reads SRSKSLTRSRSKSPK. Acidic residues-rich tracts occupy residues 98-123 and 130-158; these read YTTE…DEEL and ESDE…EYDD. Residues 172–276 form the KilA-N domain; it reads EFARGKFGDF…LKVSDIVIEY (105 aa).

This Acanthamoeba polyphaga mimivirus (APMV) protein is Putative KilA-N domain-containing protein L4.